The chain runs to 757 residues: RNA-directed RNA polymerase catalytic subunit (757 aa).

Residues 50–82 form a disordered region; sequence SEKGKWTTNTETGAPQLNPIDGPLPEDNEPSGY. Positions 55 to 64 are enriched in polar residues; it reads WTTNTETGAP. 2 short sequence motifs (nuclear localization signal) span residues 187-195 and 203-216; these read RKRRVRDNM and RTIG…NKRS. A promoter-binding site region spans residues 249-256; that stretch reads RGFVYFVE. The region spanning 286–483 is the RdRp catalytic domain; the sequence is VRKMMTNSQD…GINMSKKKSY (198 aa).

It belongs to the influenza viruses polymerase PB1 family. As to quaternary structure, influenza RNA polymerase is composed of three subunits: PB1, PB2 and PA. Interacts (via N-terminus) with PA (via C-terminus). Interacts (via C-terminus) with PB2 (via N-terminus); this interaction is essential for transcription initiation. Phosphorylated by host PRKCA.

The protein localises to the host nucleus. The protein resides in the host cytoplasm. The catalysed reaction is RNA(n) + a ribonucleoside 5'-triphosphate = RNA(n+1) + diphosphate. In terms of biological role, RNA-dependent RNA polymerase which is responsible for replication and transcription of virus RNA segments. The transcription of viral mRNAs occurs by a unique mechanism called cap-snatching. 5' methylated caps of cellular mRNAs are cleaved after 10-13 nucleotides by PA. In turn, these short capped RNAs are used as primers by PB1 for transcription of viral mRNAs. During virus replication, PB1 initiates RNA synthesis and copy vRNA into complementary RNA (cRNA) which in turn serves as a template for the production of more vRNAs. The chain is RNA-directed RNA polymerase catalytic subunit from Aves (whales).